The chain runs to 315 residues: Cobalamin biosynthesis protein CobD (315 aa).

The next 5 membrane-spanning stretches (helical) occupy residues 54-74 (GLLF…ILFL), 78-98 (IAYW…LAMT), 152-172 (ADGV…LALM), 203-223 (IANF…SFIL), and 295-315 (LLYM…LLLF).

Belongs to the CobD/CbiB family.

The protein localises to the cell membrane. It participates in cofactor biosynthesis; adenosylcobalamin biosynthesis. Functionally, converts cobyric acid to cobinamide by the addition of aminopropanol on the F carboxylic group. The protein is Cobalamin biosynthesis protein CobD of Listeria monocytogenes serovar 1/2a (strain ATCC BAA-679 / EGD-e).